Consider the following 198-residue polypeptide: Peptidyl-tRNA hydrolase (198 aa).

TRNA is bound at residue tyrosine 16. Catalysis depends on histidine 21, which acts as the Proton acceptor. TRNA is bound by residues phenylalanine 67, asparagine 69, and asparagine 115.

This sequence belongs to the PTH family. As to quaternary structure, monomer.

It is found in the cytoplasm. The enzyme catalyses an N-acyl-L-alpha-aminoacyl-tRNA + H2O = an N-acyl-L-amino acid + a tRNA + H(+). Hydrolyzes ribosome-free peptidyl-tRNAs (with 1 or more amino acids incorporated), which drop off the ribosome during protein synthesis, or as a result of ribosome stalling. Its function is as follows. Catalyzes the release of premature peptidyl moieties from peptidyl-tRNA molecules trapped in stalled 50S ribosomal subunits, and thus maintains levels of free tRNAs and 50S ribosomes. This chain is Peptidyl-tRNA hydrolase, found in Prochlorococcus marinus (strain MIT 9301).